Here is a 175-residue protein sequence, read N- to C-terminus: UPF0398 protein SUB1405 (175 aa).

This sequence belongs to the UPF0398 family.

The chain is UPF0398 protein SUB1405 from Streptococcus uberis (strain ATCC BAA-854 / 0140J).